The chain runs to 677 residues: Methionine--tRNA ligase (677 aa).

Residues 15-25 (PYANGSIHLGH) carry the 'HIGH' region motif. C146, C149, C159, and C162 together coordinate Zn(2+). The 'KMSKS' region motif lies at 333–337 (KMSKS). An ATP-binding site is contributed by K336. Residues 575–677 (DFAKVDLRVA…AGAKPGHQVK (103 aa)) form the tRNA-binding domain.

The protein belongs to the class-I aminoacyl-tRNA synthetase family. MetG type 1 subfamily. Homodimer. It depends on Zn(2+) as a cofactor.

It localises to the cytoplasm. The enzyme catalyses tRNA(Met) + L-methionine + ATP = L-methionyl-tRNA(Met) + AMP + diphosphate. In terms of biological role, is required not only for elongation of protein synthesis but also for the initiation of all mRNA translation through initiator tRNA(fMet) aminoacylation. The protein is Methionine--tRNA ligase of Shigella boydii serotype 18 (strain CDC 3083-94 / BS512).